Here is a 75-residue protein sequence, read N- to C-terminus: Mating pheromone Er-10 (75 aa).

Positions 1-19 are cleaved as a signal peptide; that stretch reads MNKLAILAIIAMVLFSANA. Positions 20-37 are excised as a propeptide; the sequence is FRFQSRIRSNVEAKTETR. 3 cysteine pairs are disulfide-bonded: C40-C56, C47-C74, and C52-C64.

Homodimer.

It localises to the secreted. Its function is as follows. Mating ciliate pheromones (or gamones) are diffusible extracellular communication signals that distinguish different intraspecific classes of cells commonly referred to as 'mating types'. They prepare the latter for conjugation by changing their cell surface properties. The sequence is that of Mating pheromone Er-10 (MAT10) from Euplotes raikovi.